The sequence spans 160 residues: Transcription antitermination protein NusB (160 aa).

This sequence belongs to the NusB family.

Functionally, involved in transcription antitermination. Required for transcription of ribosomal RNA (rRNA) genes. Binds specifically to the boxA antiterminator sequence of the ribosomal RNA (rrn) operons. In Nitrobacter hamburgensis (strain DSM 10229 / NCIMB 13809 / X14), this protein is Transcription antitermination protein NusB.